The sequence spans 625 residues: Thioredoxin domain-containing protein 6 (625 aa).

The interval Lys158 to Asn302 is NDK. The tract at residues Gly594–Glu625 is disordered. Residues Asp613–Glu625 show a composition bias toward acidic residues.

It belongs to the NDK family. Monomer and homodimer.

It is found in the cytoplasm. The protein localises to the cytoskeleton. Its subcellular location is the cilium axoneme. The protein resides in the dynein axonemal particle. Functionally, may be a regulator of microtubule physiology. The protein is Thioredoxin domain-containing protein 6 of Xenopus laevis (African clawed frog).